We begin with the raw amino-acid sequence, 214 residues long: Adenylate kinase (214 aa).

10–15 (GAGKGT) contacts ATP. The NMP stretch occupies residues 30–59 (STGDMLRAAVKAGSELGLKAKEIMDAGKLV). AMP contacts are provided by residues Thr-31, Arg-36, 57 to 59 (KLV), 85 to 88 (GFPR), and Gln-92. An LID region spans residues 122-159 (GRRVHAASGRVYHVKFNPPKVEDKDDVTGEDLTIRKDD). ATP-binding positions include Arg-123 and 132–133 (VY). The AMP site is built by Arg-156 and Arg-167. Arg-200 provides a ligand contact to ATP.

Belongs to the adenylate kinase family. As to quaternary structure, monomer.

It localises to the cytoplasm. It catalyses the reaction AMP + ATP = 2 ADP. Its pathway is purine metabolism; AMP biosynthesis via salvage pathway; AMP from ADP: step 1/1. Functionally, catalyzes the reversible transfer of the terminal phosphate group between ATP and AMP. Plays an important role in cellular energy homeostasis and in adenine nucleotide metabolism. In Yersinia enterocolitica serotype O:8 / biotype 1B (strain NCTC 13174 / 8081), this protein is Adenylate kinase.